The following is a 352-amino-acid chain: Nicotinate-nucleotide--dimethylbenzimidazole phosphoribosyltransferase (352 aa).

The active-site Proton acceptor is Glu-318.

This sequence belongs to the CobT family.

The catalysed reaction is 5,6-dimethylbenzimidazole + nicotinate beta-D-ribonucleotide = alpha-ribazole 5'-phosphate + nicotinate + H(+). It functions in the pathway nucleoside biosynthesis; alpha-ribazole biosynthesis; alpha-ribazole from 5,6-dimethylbenzimidazole: step 1/2. In terms of biological role, catalyzes the synthesis of alpha-ribazole-5'-phosphate from nicotinate mononucleotide (NAMN) and 5,6-dimethylbenzimidazole (DMB). The polypeptide is Nicotinate-nucleotide--dimethylbenzimidazole phosphoribosyltransferase (Geotalea uraniireducens (strain Rf4) (Geobacter uraniireducens)).